The chain runs to 541 residues: Membrane protein insertase YidC (541 aa).

The next 5 helical transmembrane spans lie at 7-27 (LLFM…QVDY), 345-365 (LVQN…AILY), 415-435 (LGGC…YWTF), 453-473 (LSAQ…MFLL), and 492-512 (FMPL…VLYW).

It belongs to the OXA1/ALB3/YidC family. Type 1 subfamily. As to quaternary structure, interacts with the Sec translocase complex via SecD. Specifically interacts with transmembrane segments of nascent integral membrane proteins during membrane integration.

Its subcellular location is the cell inner membrane. Functionally, required for the insertion and/or proper folding and/or complex formation of integral membrane proteins into the membrane. Involved in integration of membrane proteins that insert both dependently and independently of the Sec translocase complex, as well as at least some lipoproteins. Aids folding of multispanning membrane proteins. This is Membrane protein insertase YidC from Histophilus somni (strain 129Pt) (Haemophilus somnus).